We begin with the raw amino-acid sequence, 164 residues long: Putative pre-16S rRNA nuclease (164 aa).

This sequence belongs to the YqgF nuclease family.

The protein resides in the cytoplasm. Its function is as follows. Could be a nuclease involved in processing of the 5'-end of pre-16S rRNA. This Rhizobium etli (strain CIAT 652) protein is Putative pre-16S rRNA nuclease.